The chain runs to 280 residues: Aspartate/glutamate leucyltransferase (280 aa).

This sequence belongs to the R-transferase family. Bpt subfamily.

It localises to the cytoplasm. It catalyses the reaction N-terminal L-glutamyl-[protein] + L-leucyl-tRNA(Leu) = N-terminal L-leucyl-L-glutamyl-[protein] + tRNA(Leu) + H(+). The enzyme catalyses N-terminal L-aspartyl-[protein] + L-leucyl-tRNA(Leu) = N-terminal L-leucyl-L-aspartyl-[protein] + tRNA(Leu) + H(+). Its function is as follows. Functions in the N-end rule pathway of protein degradation where it conjugates Leu from its aminoacyl-tRNA to the N-termini of proteins containing an N-terminal aspartate or glutamate. The chain is Aspartate/glutamate leucyltransferase from Cereibacter sphaeroides (strain ATCC 17023 / DSM 158 / JCM 6121 / CCUG 31486 / LMG 2827 / NBRC 12203 / NCIMB 8253 / ATH 2.4.1.) (Rhodobacter sphaeroides).